The chain runs to 631 residues: 1-deoxy-D-xylulose-5-phosphate synthase (631 aa).

Residues histidine 87 and 128 to 130 (GHS) contribute to the thiamine diphosphate site. Aspartate 159 is a Mg(2+) binding site. Thiamine diphosphate is bound by residues 160 to 161 (GA), asparagine 188, phenylalanine 295, and glutamate 377. Residue asparagine 188 participates in Mg(2+) binding.

Belongs to the transketolase family. DXPS subfamily. Homodimer. It depends on Mg(2+) as a cofactor. The cofactor is thiamine diphosphate.

The enzyme catalyses D-glyceraldehyde 3-phosphate + pyruvate + H(+) = 1-deoxy-D-xylulose 5-phosphate + CO2. Its pathway is metabolic intermediate biosynthesis; 1-deoxy-D-xylulose 5-phosphate biosynthesis; 1-deoxy-D-xylulose 5-phosphate from D-glyceraldehyde 3-phosphate and pyruvate: step 1/1. Functionally, catalyzes the acyloin condensation reaction between C atoms 2 and 3 of pyruvate and glyceraldehyde 3-phosphate to yield 1-deoxy-D-xylulose-5-phosphate (DXP). In Pseudomonas putida (strain ATCC 700007 / DSM 6899 / JCM 31910 / BCRC 17059 / LMG 24140 / F1), this protein is 1-deoxy-D-xylulose-5-phosphate synthase.